Here is a 304-residue protein sequence, read N- to C-terminus: ATP synthase gamma chain (304 aa).

Belongs to the ATPase gamma chain family. F-type ATPases have 2 components, CF(1) - the catalytic core - and CF(0) - the membrane proton channel. CF(1) has five subunits: alpha(3), beta(3), gamma(1), delta(1), epsilon(1). CF(0) has three main subunits: a, b and c.

The protein resides in the cell membrane. Produces ATP from ADP in the presence of a proton gradient across the membrane. The gamma chain is believed to be important in regulating ATPase activity and the flow of protons through the CF(0) complex. The polypeptide is ATP synthase gamma chain (Mycobacterium marinum (strain ATCC BAA-535 / M)).